Reading from the N-terminus, the 230-residue chain is MVPEYSRFYNILGYNFKDYTLLIRALTHRSKTKKNYERLEFLGDSVLSFVIAEVLYKQFTDLAEGKLSQLRSKLVKGTTLAQLASSLKMDEYIILGASEQGGHKREKILEDVFEAVIGAIYLDSDFATVKKVILKWYQPIISSINLDTIKFKDSKSKLQEILLQNALSLPEYSIETIDGKDHEQQFTVVAVSKDLNLRVKAQGTSRKKAEQKTAEKMIEMLSQQGLHEKK.

The RNase III domain occupies 5–125 (YSRFYNILGY…VIGAIYLDSD (121 aa)). Mg(2+) is bound at residue Glu-40. Asp-44 is an active-site residue. Mg(2+) is bound by residues Asp-111 and Glu-114. Glu-114 is an active-site residue. One can recognise a DRBM domain in the interval 153–223 (DSKSKLQEIL…AEKMIEMLSQ (71 aa)).

The protein belongs to the ribonuclease III family. In terms of assembly, homodimer. Requires Mg(2+) as cofactor.

It localises to the cytoplasm. It catalyses the reaction Endonucleolytic cleavage to 5'-phosphomonoester.. Its function is as follows. Digests double-stranded RNA. Involved in the processing of primary rRNA transcript to yield the immediate precursors to the large and small rRNAs (23S and 16S). Processes some mRNAs, and tRNAs when they are encoded in the rRNA operon. Processes pre-crRNA and tracrRNA of type II CRISPR loci if present in the organism. This Francisella tularensis subsp. holarctica (strain OSU18) protein is Ribonuclease 3.